A 47-amino-acid chain; its full sequence is Bacteriocin curvaticin DN317 (47 aa).

The protein belongs to the bacteriocin class IIA/YGNGV family.

The protein resides in the secreted. Functionally, has bactericidal activity against various Gram-negative Campylobacter, and the Gram-positive L.monocytogenes and B.subtilis. In vitro, inhibits C.jejuni strain ATCC 33560 (MIC=27.3 ug/ml). This chain is Bacteriocin curvaticin DN317, found in Latilactobacillus curvatus (Lactobacillus curvatus).